Here is a 306-residue protein sequence, read N- to C-terminus: tRNA dimethylallyltransferase (306 aa).

Residue 12-19 (GPTASGKT) participates in ATP binding. 14–19 (TASGKT) provides a ligand contact to substrate. 3 interaction with substrate tRNA regions span residues 37-40 (DSAL), 161-165 (QRLSR), and 242-247 (RCVGYR).

Belongs to the IPP transferase family. Monomer. Mg(2+) serves as cofactor.

It catalyses the reaction adenosine(37) in tRNA + dimethylallyl diphosphate = N(6)-dimethylallyladenosine(37) in tRNA + diphosphate. Catalyzes the transfer of a dimethylallyl group onto the adenine at position 37 in tRNAs that read codons beginning with uridine, leading to the formation of N6-(dimethylallyl)adenosine (i(6)A). The polypeptide is tRNA dimethylallyltransferase (Shewanella amazonensis (strain ATCC BAA-1098 / SB2B)).